The chain runs to 692 residues: Elongation factor G (692 aa).

The tr-type G domain maps to 8–282 (ENTRNIGIMA…AVIDYLPSPL (275 aa)). GTP contacts are provided by residues 17-24 (AHIDAGKT), 81-85 (DTPGH), and 135-138 (NKMD).

This sequence belongs to the TRAFAC class translation factor GTPase superfamily. Classic translation factor GTPase family. EF-G/EF-2 subfamily.

Its subcellular location is the cytoplasm. Catalyzes the GTP-dependent ribosomal translocation step during translation elongation. During this step, the ribosome changes from the pre-translocational (PRE) to the post-translocational (POST) state as the newly formed A-site-bound peptidyl-tRNA and P-site-bound deacylated tRNA move to the P and E sites, respectively. Catalyzes the coordinated movement of the two tRNA molecules, the mRNA and conformational changes in the ribosome. This is Elongation factor G from Bacillus thuringiensis subsp. konkukian (strain 97-27).